Consider the following 493-residue polypeptide: MTESTDPSSRAGEAGALWGGRFAGGPSPELVALSRSTHFDWQLAPYDIAGSRAHARALAAAGYLSDAERQAMLQALDTLEDRVRSGALVASEADEDVHGALERGLMDIAGPDLGGKLRAGRSRNDQIATLVRMYLRDHAAVIHAMLVQLVDALAAQAEAAGGAIMPGRTHLQHAQPVLLAHHLLAHCWPLVRDLERLADWDARADVSPYGSGALAGSTLGLDASAVARDLGFARSSENSIDGTAARDVVAEFAFVLAQVGIDLSRLSEEIILWNTREFGFVTLSDSFSTGSSIMPQKKNPDIAELARGKSGRLIGNLSGLLATLKGLPLAYNRDLQEDKEPVFDSVQTLEVLLPAFTGMIATLRFDVDRMAELAPQGFSLATDVAEWLVKHRVAFRDAHEITGELVKLAESRGVGLEDLSDDDLRAVSPHLVPEVREVLSIDGSVASRDGVGGTARVRVDEQRAELVRRVAELRARADAAAERRAAASAAASA.

The protein belongs to the lyase 1 family. Argininosuccinate lyase subfamily.

It is found in the cytoplasm. The catalysed reaction is 2-(N(omega)-L-arginino)succinate = fumarate + L-arginine. It functions in the pathway amino-acid biosynthesis; L-arginine biosynthesis; L-arginine from L-ornithine and carbamoyl phosphate: step 3/3. The chain is Argininosuccinate lyase from Clavibacter sepedonicus (Clavibacter michiganensis subsp. sepedonicus).